The chain runs to 284 residues: 2-dehydro-3-deoxyphosphooctonate aldolase (284 aa).

The protein belongs to the KdsA family.

Its subcellular location is the cytoplasm. The enzyme catalyses D-arabinose 5-phosphate + phosphoenolpyruvate + H2O = 3-deoxy-alpha-D-manno-2-octulosonate-8-phosphate + phosphate. The protein operates within carbohydrate biosynthesis; 3-deoxy-D-manno-octulosonate biosynthesis; 3-deoxy-D-manno-octulosonate from D-ribulose 5-phosphate: step 2/3. Its pathway is bacterial outer membrane biogenesis; lipopolysaccharide biosynthesis. The protein is 2-dehydro-3-deoxyphosphooctonate aldolase of Haemophilus influenzae (strain 86-028NP).